The following is a 165-amino-acid chain: Lithostathine (165 aa).

The signal sequence occupies residues 1–21 (MTRNKYFILLSCLMVLSPSQG). Glutamine 22 bears the Pyrrolidone carboxylic acid mark. Residues 33–163 (ITCPEGSNAY…DAQLSFVCKF (131 aa)) enclose the C-type lectin domain. Cystine bridges form between cysteine 35–cysteine 46, cysteine 63–cysteine 161, and cysteine 136–cysteine 153. A glycan (N-linked (GlcNAc...) asparagine) is linked at asparagine 129.

As to expression, expressed only in regenerating islets, but not in normal pancreatic islets, insulinomas or regenerating liver.

It is found in the secreted. Might act as an inhibitor of spontaneous calcium carbonate precipitation. This is Lithostathine (Reg1) from Rattus norvegicus (Rat).